Reading from the N-terminus, the 349-residue chain is Phosphoribosylformylglycinamidine cyclo-ligase (349 aa).

Belongs to the AIR synthase family.

The protein resides in the cytoplasm. It catalyses the reaction 2-formamido-N(1)-(5-O-phospho-beta-D-ribosyl)acetamidine + ATP = 5-amino-1-(5-phospho-beta-D-ribosyl)imidazole + ADP + phosphate + H(+). The protein operates within purine metabolism; IMP biosynthesis via de novo pathway; 5-amino-1-(5-phospho-D-ribosyl)imidazole from N(2)-formyl-N(1)-(5-phospho-D-ribosyl)glycinamide: step 2/2. This is Phosphoribosylformylglycinamidine cyclo-ligase from Methanococcus maripaludis (strain C6 / ATCC BAA-1332).